Consider the following 287-residue polypeptide: Nucleotide-binding protein GM21_3387 (287 aa).

8–15 provides a ligand contact to ATP; it reads GLSGSGKS. 59-62 is a binding site for GTP; the sequence is DIRS.

This sequence belongs to the RapZ-like family.

Displays ATPase and GTPase activities. The chain is Nucleotide-binding protein GM21_3387 from Geobacter sp. (strain M21).